The sequence spans 179 residues: Stress response regulator gls24 homolog (179 aa).

A disordered region spans residues 147-179 (TSEFTSHQVENVKASVDNGVEKLQDQKAEPRVK). A compositionally biased stretch (basic and acidic residues) spans 165-179 (GVEKLQDQKAEPRVK).

The protein belongs to the asp23 family.

This Streptococcus pyogenes serotype M28 (strain MGAS6180) protein is Stress response regulator gls24 homolog.